Here is an 876-residue protein sequence, read N- to C-terminus: MAP7 domain-containing protein 3 (876 aa).

N-acetylmethionine is present on Met1. Residues Asn65 to Ala144 are a coiled coil. Disordered stretches follow at residues Ala72 to Ala137 and Ala170 to Val246. Positions Met171 to Ser183 are enriched in polar residues. Position 185 is a phosphoserine (Ser185). Positions Gln191–Val211 are enriched in polar residues. The span at Arg214–Pro244 shows a compositional bias: basic and acidic residues. Ser322 is modified (phosphoserine). Residues Glu407–Met475 are disordered. Basic and acidic residues predominate over residues Ala425–Met438. Residues Ser441, Ser457, and Ser461 each carry the phosphoserine modification. The span at Lys465–Met475 shows a compositional bias: basic and acidic residues. Ser490 bears the Phosphoserine mark. Disordered regions lie at residues Ser509 to Ser533, Gln613 to His697, and Arg723 to Asp754. A compositionally biased stretch (polar residues) spans Pro510 to Cys521. Position 524 is a phosphoserine (Ser524). Coiled-coil stretches lie at residues Val558–Glu640 and Glu689–Lys724. Basic and acidic residues-rich tracts occupy residues Gln613–Lys639 and Gly680–His697. The segment covering Glu742 to Asp752 has biased composition (acidic residues). Residues Ser770 and Ser817 each carry the phosphoserine modification. The tract at residues Pro802–Gln876 is disordered. The span at Asp820–Pro830 shows a compositional bias: polar residues. Positions Ser831–Thr842 are enriched in basic residues. The residue at position 832 (Ser832) is a Phosphoserine. Positions Thr848–Ser860 are enriched in polar residues. Residues Glu861–Gln876 are compositionally biased toward basic and acidic residues.

Belongs to the MAP7 family. As to quaternary structure, interacts (via N-terminus coiled coil domains) with tubulin and microtubules.

It localises to the cytoplasm. The protein localises to the cytoskeleton. The protein resides in the spindle. In terms of biological role, promotes the assembly and stability of microtubules. This chain is MAP7 domain-containing protein 3 (MAP7D3), found in Homo sapiens (Human).